We begin with the raw amino-acid sequence, 488 residues long: Ribulose bisphosphate carboxylase large chain 1 (488 aa).

Asparagine 127 and threonine 177 together coordinate substrate. Lysine 179 acts as the Proton acceptor in catalysis. Lysine 181 contributes to the substrate binding site. Residues lysine 205, aspartate 207, and glutamate 208 each contribute to the Mg(2+) site. N6-carboxylysine is present on lysine 205. Histidine 297 acts as the Proton acceptor in catalysis. Residues arginine 298, histidine 330, and serine 382 each contribute to the substrate site.

Belongs to the RuBisCO large chain family. Type I subfamily. In terms of assembly, heterohexadecamer of 8 large chains and 8 small chains. Mg(2+) is required as a cofactor.

The enzyme catalyses 2 (2R)-3-phosphoglycerate + 2 H(+) = D-ribulose 1,5-bisphosphate + CO2 + H2O. It catalyses the reaction D-ribulose 1,5-bisphosphate + O2 = 2-phosphoglycolate + (2R)-3-phosphoglycerate + 2 H(+). Functionally, ruBisCO catalyzes two reactions: the carboxylation of D-ribulose 1,5-bisphosphate, the primary event in carbon dioxide fixation, as well as the oxidative fragmentation of the pentose substrate. Both reactions occur simultaneously and in competition at the same active site. The chain is Ribulose bisphosphate carboxylase large chain 1 from Bradyrhizobium sp. (strain BTAi1 / ATCC BAA-1182).